The sequence spans 822 residues: Glycerol-3-phosphate acyltransferase (822 aa).

The HXXXXD motif motif lies at 304–309 (CHRSHM).

Belongs to the GPAT/DAPAT family.

It is found in the cell inner membrane. The catalysed reaction is sn-glycerol 3-phosphate + an acyl-CoA = a 1-acyl-sn-glycero-3-phosphate + CoA. It participates in phospholipid metabolism; CDP-diacylglycerol biosynthesis; CDP-diacylglycerol from sn-glycerol 3-phosphate: step 1/3. This Yersinia enterocolitica serotype O:8 / biotype 1B (strain NCTC 13174 / 8081) protein is Glycerol-3-phosphate acyltransferase.